The sequence spans 393 residues: Methylthioribose-1-phosphate isomerase (393 aa).

Catalysis depends on aspartate 265, which acts as the Proton donor.

Belongs to the eIF-2B alpha/beta/delta subunits family. MtnA subfamily.

The protein localises to the cytoplasm. Its subcellular location is the nucleus. The catalysed reaction is 5-(methylsulfanyl)-alpha-D-ribose 1-phosphate = 5-(methylsulfanyl)-D-ribulose 1-phosphate. It functions in the pathway amino-acid biosynthesis; L-methionine biosynthesis via salvage pathway; L-methionine from S-methyl-5-thio-alpha-D-ribose 1-phosphate: step 1/6. Its function is as follows. Catalyzes the interconversion of methylthioribose-1-phosphate (MTR-1-P) into methylthioribulose-1-phosphate (MTRu-1-P). This Cryptococcus neoformans var. neoformans serotype D (strain JEC21 / ATCC MYA-565) (Filobasidiella neoformans) protein is Methylthioribose-1-phosphate isomerase.